The chain runs to 177 residues: Large ribosomal subunit protein uL6 (177 aa).

Belongs to the universal ribosomal protein uL6 family. As to quaternary structure, part of the 50S ribosomal subunit.

This protein binds to the 23S rRNA, and is important in its secondary structure. It is located near the subunit interface in the base of the L7/L12 stalk, and near the tRNA binding site of the peptidyltransferase center. The polypeptide is Large ribosomal subunit protein uL6 (Aromatoleum aromaticum (strain DSM 19018 / LMG 30748 / EbN1) (Azoarcus sp. (strain EbN1))).